Reading from the N-terminus, the 658-residue chain is MSRIAALPDHLVNQIAAGEVVERPANALKEIVENSIDAGATAIEVELAGGGIRLIRVSDNGGGIHPDDIELALHRHATSKIKTLNDLEHVASMGFRGEGLASIASVSRLTLTSRQNDSSHATQVKAEDGKLSSPTAAAHPVGTTIEAAELFFNTPARRKFLKSENTEYAHCATMLERLALAHPHIAFSLKRDGKQVFKLPAQSLHERIAAIVGEDFQTASLGIDSGNGALRLYGAIAKPTFAKGKTDKQYCFVNHRFVRDKVMLHAVKQAYRDVLHNALTPAFVLFLDLPPEAVDVNVHPTKTEIRFRDSQQVHQLVFHTLNKALADTRANLTESVGNAGEVLHDITGVVSTPMPSENDSENLFDSVSNYPTGNKSDTHNAFGSSGKTAPMPYQSAYAPQQRSLSLRESRAAMNTYAELYKKTDDIDLELSRFEQARFGNMPSETPAPQTDTPLSDGIPSQSELPPLGFAIAQLLGIYILAQAEDSLLLIDMHAAAERVNYEKMKRQRQENGNLQSQRLLIPVTFAASHEECAALADYAETLAGFGLELSDMGGNTLAVRAVPAMLGKADVVSLAKDVLNELAQVGSSQTIEEHENRILATMSCHGSIRAGRRLTLPEMNALLRDMENTPRSNQCNHGRPTWVKLTLKELDALFLRGQ.

Disordered regions lie at residues 114–137 and 437–456; these read RQND…PTAA and RFGN…PLSD. The span at 442 to 456 shows a compositional bias: polar residues; sequence PSETPAPQTDTPLSD.

It belongs to the DNA mismatch repair MutL/HexB family.

This protein is involved in the repair of mismatches in DNA. It is required for dam-dependent methyl-directed DNA mismatch repair. May act as a 'molecular matchmaker', a protein that promotes the formation of a stable complex between two or more DNA-binding proteins in an ATP-dependent manner without itself being part of a final effector complex. This is DNA mismatch repair protein MutL from Neisseria meningitidis serogroup B (strain ATCC BAA-335 / MC58).